A 257-amino-acid chain; its full sequence is GTP cyclohydrolase FolE2 (257 aa).

This sequence belongs to the GTP cyclohydrolase IV family.

The enzyme catalyses GTP + H2O = 7,8-dihydroneopterin 3'-triphosphate + formate + H(+). The protein operates within cofactor biosynthesis; 7,8-dihydroneopterin triphosphate biosynthesis; 7,8-dihydroneopterin triphosphate from GTP: step 1/1. In terms of biological role, converts GTP to 7,8-dihydroneopterin triphosphate. The protein is GTP cyclohydrolase FolE2 of Dictyoglomus thermophilum (strain ATCC 35947 / DSM 3960 / H-6-12).